The sequence spans 328 residues: ATP-dependent 6-phosphofructokinase (328 aa).

Position 11 (Gly11) interacts with ATP. 21–25 (RAAVR) is a binding site for ADP. ATP-binding positions include 72–73 (RS) and 102–105 (GNGT). Asn103 contributes to the Mg(2+) binding site. A substrate-binding site is contributed by 126-128 (TID). The active-site Proton acceptor is Asp128. Arg155 is a binding site for ADP. Residues Arg163 and 170–172 (MGR) contribute to the substrate site. ADP-binding positions include 186–188 (GAE) and 214–216 (KAS). Substrate is bound by residues Glu223, Arg247, and 253–256 (HVQR).

The protein belongs to the phosphofructokinase type A (PFKA) family. ATP-dependent PFK group I subfamily. Prokaryotic clade 'B1' sub-subfamily. In terms of assembly, homotetramer. Mg(2+) is required as a cofactor.

Its subcellular location is the cytoplasm. The enzyme catalyses beta-D-fructose 6-phosphate + ATP = beta-D-fructose 1,6-bisphosphate + ADP + H(+). It participates in carbohydrate degradation; glycolysis; D-glyceraldehyde 3-phosphate and glycerone phosphate from D-glucose: step 3/4. Allosterically activated by ADP and other diphosphonucleosides, and allosterically inhibited by phosphoenolpyruvate. In terms of biological role, catalyzes the phosphorylation of D-fructose 6-phosphate to fructose 1,6-bisphosphate by ATP, the first committing step of glycolysis. In Cytophaga hutchinsonii (strain ATCC 33406 / DSM 1761 / CIP 103989 / NBRC 15051 / NCIMB 9469 / D465), this protein is ATP-dependent 6-phosphofructokinase.